Here is a 134-residue protein sequence, read N- to C-terminus: Beta-synuclein (134 aa).

A run of 2 repeats spans residues 20–30 (EKTKQGVTEAA) and 31–41 (EKTKEGVLYVG). Residues 20–67 (EKTKQGVTEAAEKTKEGVLYVGSKTREGVVQGVASVAEKTKEQASHLG) are 4 X 11 AA tandem repeats of [EGS]-K-T-K-[EQ]-[GQ]-V-X(4). The stretch at 42-56 (SKTREGVVQGVASVA) is one 3; approximate repeat. The stretch at 57-67 (EKTKEQASHLG) is repeat 4. Residues 89-134 (FPTDLKPEEVAQEAAEEPLIEPLMEPEGESYEDPPQEEYQEYEPEA) form a disordered region. Acidic residues predominate over residues 98 to 134 (VAQEAAEEPLIEPLMEPEGESYEDPPQEEYQEYEPEA). Serine 118 is modified (phosphoserine; by BARK1, CK2 and GRK5).

Belongs to the synuclein family. Phosphorylated. Phosphorylation by G-protein coupled receptor kinases (GRK) is more efficient than phosphorylation by CK1, CK2 and CaM-kinase II. Expressed predominantly in brain; concentrated in presynaptic nerve terminals.

It localises to the cytoplasm. Its function is as follows. Non-amyloid component of senile plaques found in Alzheimer disease. Could act as a regulator of SNCA aggregation process. Protects neurons from staurosporine and 6-hydroxy dopamine (6OHDA)-stimulated caspase activation in a p53/TP53-dependent manner. Contributes to restore the SNCA anti-apoptotic function abolished by 6OHDA. Not found in the Lewy bodies associated with Parkinson disease. The protein is Beta-synuclein (SNCB) of Homo sapiens (Human).